The chain runs to 337 residues: Protein BIG GRAIN 1-like (337 aa).

Disordered stretches follow at residues 1–32, 120–163, and 179–233; these read MRDM…PSFS, SAAG…RPAS, and KRPS…ARPS. Over residues 137-146 the composition is skewed to basic and acidic residues; it reads HEQPDVEKTA. Composition is skewed to low complexity over residues 150-163, 195-209, and 219-230; these read PGSA…RPAS, PACS…SSYA, and RTPPTTTTTARA.

It belongs to the BIG GRAIN 1 (BG1) plant protein family.

Its subcellular location is the cell membrane. Functionally, involved in auxin transport. Regulator of the auxin signaling pathway. The polypeptide is Protein BIG GRAIN 1-like (Oryza sativa subsp. indica (Rice)).